The following is a 205-amino-acid chain: dTTP/UTP pyrophosphatase (205 aa).

Aspartate 81 functions as the Proton acceptor in the catalytic mechanism.

The protein belongs to the Maf family. YhdE subfamily. Requires a divalent metal cation as cofactor.

The protein localises to the cytoplasm. It carries out the reaction dTTP + H2O = dTMP + diphosphate + H(+). The catalysed reaction is UTP + H2O = UMP + diphosphate + H(+). Its function is as follows. Nucleoside triphosphate pyrophosphatase that hydrolyzes dTTP and UTP. May have a dual role in cell division arrest and in preventing the incorporation of modified nucleotides into cellular nucleic acids. The polypeptide is dTTP/UTP pyrophosphatase (Agathobacter rectalis (strain ATCC 33656 / DSM 3377 / JCM 17463 / KCTC 5835 / VPI 0990) (Eubacterium rectale)).